A 720-amino-acid polypeptide reads, in one-letter code: Heat shock protein homolog pss1 (720 aa).

S38 bears the Phosphoserine mark. T39 is subject to Phosphothreonine. Positions 658 to 690 (KRQKVQAEREAAKAATKSEAEKQKPSGKFEEGT) are enriched in basic and acidic residues. The tract at residues 658 to 720 (KRQKVQAERE…ETMEIDEQKE (63 aa)) is disordered. Residues 703–720 (VAPENEEVETMEIDEQKE) show a composition bias toward acidic residues.

This sequence belongs to the heat shock protein 70 family.

Its subcellular location is the cytoplasm. Functionally, required for normal growth at various temperatures. The sequence is that of Heat shock protein homolog pss1 (pss1) from Schizosaccharomyces pombe (strain 972 / ATCC 24843) (Fission yeast).